The sequence spans 239 residues: MQPFSIPVQITLQGGRRRQGRTALPASGISNGDPLKVHPKLPSSAGEDRATLLGIAMMASSVLMFFLLGTTVLKPFMLSSPREESNCTTVHTHIADDWLDFAFTCEGSCQGQGTYPCLQVFVNLSHSGQKVLLHYDEEAIRTNPKCFYTPKCHGDRDHLLNSALDIKEFFDHNNGTFPCFYSPDGPLGVVLRKSGHKVVFHCLFWPLLTLLGGALIVGLVRLTQHLSFQCEKYRAVVRA.

Topologically, residues 1–51 are cytoplasmic; sequence MQPFSIPVQITLQGGRRRQGRTALPASGISNGDPLKVHPKLPSSAGEDRAT. Residues 15-38 are disordered; the sequence is GRRRQGRTALPASGISNGDPLKVH. The helical transmembrane segment at 52 to 72 threads the bilayer; it reads LLGIAMMASSVLMFFLLGTTV. Topologically, residues 73–197 are extracellular; the sequence is LKPFMLSSPR…GVVLRKSGHK (125 aa). N-linked (GlcNAc...) asparagine glycans are attached at residues Asn-86, Asn-123, and Asn-174. The helical transmembrane segment at 198 to 218 threads the bilayer; it reads VVFHCLFWPLLTLLGGALIVG. Residues 219-239 lie on the Cytoplasmic side of the membrane; the sequence is LVRLTQHLSFQCEKYRAVVRA.

It belongs to the KCNMB (TC 8.A.14.1) family. KCNMB3 subfamily. In terms of assembly, interacts with KCNMA1 tetramer. There are probably 4 molecules of KCMNB3 per KCNMA1 tetramer. N-glycosylated. Post-translationally, the extracellular domain contains disulfide bond essential for the gating mechanism.

Its subcellular location is the membrane. In terms of biological role, regulatory subunit of the calcium activated potassium KCNMA1 (maxiK) channel. Modulates the calcium sensitivity and gating kinetics of KCNMA1, thereby contributing to KCNMA1 channel diversity. Alters the functional properties of the current expressed by the KCNMA1 channel. May partially inactivate the current of KCNBMA. Two or more subunits of KCNMB3 are required to block the KCNMA1 tetramer. This is Calcium-activated potassium channel subunit beta-3 from Rattus norvegicus (Rat).